The following is a 290-amino-acid chain: Transposon Ty3-I Gag polyprotein (290 aa).

Ser-2 is subject to N-acetylserine. The CCHC-type zinc-finger motif lies at 265–282 (RLCFYCKKEGHRLNECRA).

It is found in the cytoplasm. Its function is as follows. Capsid protein (CA) is the structural component of the virus-like particle (VLP), forming the shell that encapsulates the retrotransposons dimeric RNA genome. Functionally, nucleocapsid protein p9 (NC) forms the nucleocore that coats the retro-elements dimeric RNA. Binds these RNAs through its zinc fingers. Promotes primer tRNA(i)-Met annealing to the multipartite primer-binding site (PBS), dimerization of Ty3 RNA and initiation of reverse transcription. The polypeptide is Transposon Ty3-I Gag polyprotein (TY3A-I) (Saccharomyces cerevisiae (strain ATCC 204508 / S288c) (Baker's yeast)).